A 765-amino-acid polypeptide reads, in one-letter code: MAATGTAAAAATGKLLVLLLLGLTAPAAALAGYIEALAANAGTGFAVAEPQIAMFCGKLNMHVNIQTGKWEPDPTGTKSCLGTKEEVLQYCQEIYPELQITNVMEANQPVNIDSWCRRDKKQCRSHIVIPFKCLVGEFVSDVLLVPENCQFFHQERMEVCEKHQRWHTVVKEACLTEGMTLYSYGMLLPCGVDQFHGTEYVCCPQTKVVDSDSTMSKEEEEEEEEDEEEDYALDKSEFPTEADLEDFTEAAADEDEDEEEEEEEEGEEVVEDRDYYYDSFKGDDYNEENPTEPSSDGTISDKEIAHDVKAVCSQEAMTGPCRAVMPRWYFDLSKGKCVRFIYGGCGGNRNNFESEDYCMAVCKTMIPPTPLPTNDVDVYFETSADDNEHARFQKAKEQLEIRHRSRMDRVKKEWEEAELQAKNLPKAERQTLIQHFQAMVKALEKEAASEKQQLVETHLARVEAMLNDRRRIALENYLAALQSDPPRPHRILQALRRYVRAENKDRLHTIRHYQHVLAVDPEKAAQMKSQVMTHLHVIEERRNQSLSLLYKVPYVAQEIQEEIDELLQEQRADMDQFTSSISENPVDVRVSSEESEEIPPFHPFHPFPSLSENEDTQPELYHPMKKGSGMAEQDGGLIGAEEKVINSKNKMDENMVIDETLDVKEMIFNAERVGGLEEEPDSVGPLREDFSLSSSALIGLLVIAVAIATVIVISLVMLRKRQYGTISHGIVEVHPMLTPEERHLNKMQNHGYENPTYKYLEQMQI.

An N-terminal signal peptide occupies residues Met1–Ala31. Topologically, residues Gly32 to Ser695 are extracellular. The tract at residues Ala46–Val139 is GFLD subdomain. The 160-residue stretch at Ala46–Gln205 folds into the E1 domain. Disulfide bonds link Cys56-Cys80, Cys91-Cys133, Cys116-Cys123, Cys149-Cys203, Cys160-Cys190, and Cys174-Cys202. The interval Glu147–Gln205 is cuBD subdomain. 3 residues coordinate Cu cation: His163, His167, and Tyr184. The tract at residues Ser211–Asp301 is disordered. Position 216 is a phosphoserine (Ser216). Acidic residues-rich tracts occupy residues Glu218 to Tyr231 and Thr240 to Glu271. Positions Asp272–Asp284 are enriched in basic and acidic residues. A BPTI/Kunitz inhibitor domain is found at Val308–Ile366. 3 disulfide bridges follow: Cys312/Cys362, Cys321/Cys345, and Cys337/Cys358. Residues Asp375 to Leu566 form the E2 domain. Phosphoserine is present on Ser592. The segment at Glu597 to Thr616 is disordered. O-linked (Xyl...) (chondroitin sulfate) serine glycosylation occurs at Ser628. A helical transmembrane segment spans residues Ala696–Leu718. Residues Arg719–Ile765 lie on the Cytoplasmic side of the membrane. Positions Gly751–Ile765 are interaction with DAB2. The NPXY motif signature appears at Tyr752–Tyr757.

This sequence belongs to the APP family. As to quaternary structure, interacts with CPEB1. Interacts (via NPXY motif) with DAB2 (via PID domain); the interaction is impaired by tyrosine phosphorylation of the NPXY motif. Interacts (via cytoplasmic domain) with APBB2/FE65L. Interacts (via intracellular domain) with APBB3/FE65L2.

Its subcellular location is the membrane. Its function is as follows. May play a role in the regulation of hemostasis. The soluble form may have inhibitory properties towards coagulation factors. May interact with cellular G-protein signaling pathways. May bind to the DNA 5'-GTCACATG-3'(CDEI box). Inhibits trypsin, chymotrypsin, plasmin, factor XIA and plasma and glandular kallikrein. Modulates the Cu/Zn nitric oxide-catalyzed autodegradation of GPC1 heparan sulfate side chains in fibroblasts. The polypeptide is Amyloid beta precursor like protein 2 (Rattus norvegicus (Rat)).